A 185-amino-acid chain; its full sequence is Adenine phosphoribosyltransferase (185 aa).

This sequence belongs to the purine/pyrimidine phosphoribosyltransferase family.

Its subcellular location is the cytoplasm. The catalysed reaction is AMP + diphosphate = 5-phospho-alpha-D-ribose 1-diphosphate + adenine. It functions in the pathway purine metabolism; AMP biosynthesis via salvage pathway; AMP from adenine: step 1/1. In terms of biological role, catalyzes a salvage reaction resulting in the formation of AMP, that is energically less costly than de novo synthesis. The protein is Adenine phosphoribosyltransferase (aprt-1) of Caenorhabditis elegans.